A 454-amino-acid polypeptide reads, in one-letter code: GA-binding protein alpha chain (454 aa).

Positions 168-251 constitute a PNT domain; the sequence is AALEGYRKEQ…SHLELLRKYV (84 aa). The tract at residues 297–316 is disordered; it reads QRAPRISGEDRSSPGNRTGN. S303 is subject to Phosphoserine. Positions 320–400 form a DNA-binding region, ETS; it reads IQLWQFLLEL…QGKRFVYKFV (81 aa).

The protein belongs to the ETS family. In terms of assembly, heterotetramer of two alpha and two beta subunits.

The protein localises to the nucleus. Transcription factor capable of interacting with purine rich repeats (GA repeats). Positively regulates transcription of transcriptional repressor RHIT/ZNF205. Functionally, (Microbial infection) Necessary for the expression of the Adenovirus E4 gene. This chain is GA-binding protein alpha chain (GABPA), found in Homo sapiens (Human).